A 223-amino-acid polypeptide reads, in one-letter code: NLP effector protein 3 (223 aa).

The Conserved undecapeptide motif signature appears at 90–100 (AIMYVWYFPKD). Residues 107 to 113 (GHRHDWE) carry the Conserved heptapeptide motif motif.

Belongs to the Necrosis inducing protein (NPP1) family.

The protein resides in the secreted. The protein localises to the host cytoplasm. Functionally, probable secreted effector that may act as a pathogen-associated molecular pattern (PAMP) recognized by the plant immune system. Seems not to induce necrosis, neither in several susceptible or resistant Vitis species nor in the dicot model plant Nicotiana benthamiana. This Plasmopara viticola (Downy mildew of grapevine) protein is NLP effector protein 3.